The sequence spans 154 residues: Protein X (154 aa).

The interval 68-117 is mitochondrial targeting sequence; it reads PCALRFTSARRMETTVNAHQFLPKVLHKRTLGLSVMSTTDLEAYFKDCLF.

The protein belongs to the orthohepadnavirus protein X family. As to quaternary structure, may form homodimer. May interact with host CEBPA, CFLAR, CREB1, DDB1, E4F1, HBXIP, HSPD1/HSP60, NFKBIA, POLR2E and SMAD4. Interacts with host SMC5-SMC6 complex and induces its degradation. Interacts with host TRPC4AP; leading to prevent ubiquitination of TRPC4AP. Interacts with host PLSCR1; this interaction promotes ubiquitination and degradation of HBx and impairs HBx-mediated cell proliferation. In terms of processing, a fraction may be phosphorylated in insect cells and HepG2 cells, a human hepatoblastoma cell line. Phosphorylated in vitro by host protein kinase C or mitogen-activated protein kinase. N-acetylated in insect cells.

The protein localises to the host cytoplasm. The protein resides in the host nucleus. It localises to the host mitochondrion. In terms of biological role, multifunctional protein that plays a role in silencing host antiviral defenses and promoting viral transcription. Does not seem to be essential for HBV infection. May be directly involved in development of cirrhosis and liver cancer (hepatocellular carcinoma). Most of cytosolic activities involve modulation of cytosolic calcium. The effect on apoptosis is controversial depending on the cell types in which the studies have been conducted. May induce apoptosis by localizing in mitochondria and causing loss of mitochondrial membrane potential. May also modulate apoptosis by binding host CFLAR, a key regulator of the death-inducing signaling complex (DISC). Promotes viral transcription by using the host E3 ubiquitin ligase DDB1 to target the SMC5-SMC6 complex to proteasomal degradation. This host complex would otherwise bind to viral episomal DNA, and prevents its transcription. Moderately stimulates transcription of many different viral and cellular transcription elements. Promoters and enhancers stimulated by HBx contain DNA binding sites for NF-kappa-B, AP-1, AP-2, c-EBP, ATF/CREB, or the calcium-activated factor NF-AT. The sequence is that of Protein X from Hepatitis B virus genotype D (isolate France/alpha1/1989) (HBV-D).